We begin with the raw amino-acid sequence, 391 residues long: Inhibin beta B chain (391 aa).

Positions 1–25 (MDGAARRGVLAALLACGLLLLGAAA) are cleaved as a signal peptide. Positions 26–276 (TPTPPPAGSS…ADNKHRIRKR (251 aa)) are excised as a propeptide. The interval 27-47 (PTPPPAGSSPQDTCTSCGFRR) is disordered. The N-linked (GlcNAc...) asparagine glycan is linked to N77. Intrachain disulfides connect C280/C288, C287/C356, C316/C388, and C320/C390.

It belongs to the TGF-beta family. As to quaternary structure, dimeric, linked by one or more disulfide bonds. Inhibin A is a dimer of alpha and beta-A. Inhibin B is a dimer of alpha and beta-B. Activin A is a homodimer of beta-A. Activin B is a homodimer of beta-B. Activin AB is a dimer of beta-A and beta-B.

It is found in the secreted. Inhibins and activins inhibit and activate, respectively, the secretion of follitropin by the pituitary gland. Inhibins/activins are involved in regulating a number of diverse functions such as hypothalamic and pituitary hormone secretion, gonadal hormone secretion, germ cell development and maturation, erythroid differentiation, insulin secretion, nerve cell survival, embryonic axial development or bone growth, depending on their subunit composition. Inhibins appear to oppose the functions of activins. The sequence is that of Inhibin beta B chain (INHBB) from Gallus gallus (Chicken).